Here is a 451-residue protein sequence, read N- to C-terminus: MRECISIHIGQAGIQVGNACWELYCLEHGIQPDGQMPGDKTVGGGDDAFNTFFSETGAGKHVPRAVFVDLEPTVIDEVRTGTYRQLFHPEQLISGKEDAANNFARGHYTIGKEIVDLCLDRIRKLADNCTGLQGFLVFNAVGGGTGSGLGSLLLERLSVDYGKKSKLGFTVYPSPQVSTSVVEPYNSVLSTHSLLEHTDVAVLLDNEAIYDICRRSLDIERPTYTNLNRLVSQVISSLTASLRFDGALNVDVNEFQTNLVPYPRIHFMLSSYAPVISAEKAYHEQLSVAEITNSAFEPSSMMAKCDPRHGKYMACCLMYRGDVVPKDVNAAVATIKTKRTIQFVDWCPTGFKCGINYQPPSVVPGGDLAKVQRAVCMISNSTSVVEVFSRIDHKFDLMYAKRAFVHWYVGEGMEEGEFSEAREDLAALEKDYEEVGAEFDEGEDGDEGDEY.

Glutamine 11 is a binding site for GTP. The residue at position 40 (lysine 40) is an N6-acetyllysine. Residues glutamate 71, glycine 144, threonine 145, threonine 179, asparagine 206, and asparagine 228 each contribute to the GTP site. A Mg(2+)-binding site is contributed by glutamate 71. The active site involves glutamate 254.

Belongs to the tubulin family. In terms of assembly, dimer of alpha and beta chains. A typical microtubule is a hollow water-filled tube with an outer diameter of 25 nm and an inner diameter of 15 nM. Alpha-beta heterodimers associate head-to-tail to form protofilaments running lengthwise along the microtubule wall with the beta-tubulin subunit facing the microtubule plus end conferring a structural polarity. Microtubules usually have 13 protofilaments but different protofilament numbers can be found in some organisms and specialized cells. Requires Mg(2+) as cofactor. In terms of processing, undergoes a tyrosination/detyrosination cycle, the cyclic removal and re-addition of a C-terminal tyrosine residue by the enzymes tubulin tyrosine carboxypeptidase (TTCP) and tubulin tyrosine ligase (TTL), respectively. Post-translationally, acetylation of alpha chains at Lys-40 stabilizes microtubules and affects affinity and processivity of microtubule motors. This modification has a role in multiple cellular functions, ranging from cell motility, cell cycle progression or cell differentiation to intracellular trafficking and signaling.

The protein resides in the cytoplasm. Its subcellular location is the cytoskeleton. The catalysed reaction is GTP + H2O = GDP + phosphate + H(+). Tubulin is the major constituent of microtubules, a cylinder consisting of laterally associated linear protofilaments composed of alpha- and beta-tubulin heterodimers. Microtubules grow by the addition of GTP-tubulin dimers to the microtubule end, where a stabilizing cap forms. Below the cap, tubulin dimers are in GDP-bound state, owing to GTPase activity of alpha-tubulin. In Hordeum vulgare (Barley), this protein is Tubulin alpha-3 chain (TUBA3).